Consider the following 393-residue polypeptide: NAD(P)H-quinone oxidoreductase subunit H, chloroplastic (393 aa).

Belongs to the complex I 49 kDa subunit family. NDH is composed of at least 16 different subunits, 5 of which are encoded in the nucleus.

The protein resides in the plastid. It is found in the chloroplast thylakoid membrane. It carries out the reaction a plastoquinone + NADH + (n+1) H(+)(in) = a plastoquinol + NAD(+) + n H(+)(out). The enzyme catalyses a plastoquinone + NADPH + (n+1) H(+)(in) = a plastoquinol + NADP(+) + n H(+)(out). In terms of biological role, NDH shuttles electrons from NAD(P)H:plastoquinone, via FMN and iron-sulfur (Fe-S) centers, to quinones in the photosynthetic chain and possibly in a chloroplast respiratory chain. The immediate electron acceptor for the enzyme in this species is believed to be plastoquinone. Couples the redox reaction to proton translocation, and thus conserves the redox energy in a proton gradient. The polypeptide is NAD(P)H-quinone oxidoreductase subunit H, chloroplastic (Hordeum vulgare (Barley)).